A 482-amino-acid polypeptide reads, in one-letter code: MKFTTYTTFPEQTSNESLWILVDSEQLQSNLNTYQINNLESILTATQFKANFNETLPLFGQLSTQPHSQLLGLGKAAELQAAKLAKLAQTIIKSAQNKFKHIAIDIAALPVEYHYLFALSLTQAAYGYDEFKSKKNEFVLQQVDLISSQTSLDENQLALVHAVQSGQSYARDLGNRPGNICFPEYLAEQALALAAEFPDLLKVTVLNEQQMADLGMYAFLAVSKGSERPGRIVTLEYQAQLEQAPVVLVGKGVTFDTGGISLKPGLGMDEMKFDMCGAASVLGTIRALCEARLPIHVVGAIAAAENMPSGKATRPGDIVTTMSGQTVEILNTDAEGRLVLCDTLTYIKRFNPAVVIDIATLTGACVVALGKVLSGLFSPDDTLAAELQQAGEQSFDRVWRMPVIDDYQELLDSPFADIANIGGPHGGAITAACFLERFTRDYRWAHLDVAGTAWLSGSAKGATGRPVPLLMQFLANRVSTNG.

Mn(2+) contacts are provided by K251 and D256. K263 is an active-site residue. D274, D333, and E335 together coordinate Mn(2+). R337 is an active-site residue.

The protein belongs to the peptidase M17 family. It depends on Mn(2+) as a cofactor.

It localises to the cytoplasm. The catalysed reaction is Release of an N-terminal amino acid, Xaa-|-Yaa-, in which Xaa is preferably Leu, but may be other amino acids including Pro although not Arg or Lys, and Yaa may be Pro. Amino acid amides and methyl esters are also readily hydrolyzed, but rates on arylamides are exceedingly low.. The enzyme catalyses Release of an N-terminal amino acid, preferentially leucine, but not glutamic or aspartic acids.. In terms of biological role, presumably involved in the processing and regular turnover of intracellular proteins. Catalyzes the removal of unsubstituted N-terminal amino acids from various peptides. In Acinetobacter baumannii (strain AB307-0294), this protein is Probable cytosol aminopeptidase.